A 172-amino-acid chain; its full sequence is Orotate phosphoribosyltransferase (172 aa).

Residues Arg88, Lys89, Lys92, His94, and 113-121 (EDVTTSGGS) each bind 5-phospho-alpha-D-ribose 1-diphosphate. The orotate site is built by Thr117 and Arg145.

This sequence belongs to the purine/pyrimidine phosphoribosyltransferase family. PyrE subfamily. As to quaternary structure, homodimer. Requires Mg(2+) as cofactor.

It catalyses the reaction orotidine 5'-phosphate + diphosphate = orotate + 5-phospho-alpha-D-ribose 1-diphosphate. The protein operates within pyrimidine metabolism; UMP biosynthesis via de novo pathway; UMP from orotate: step 1/2. In terms of biological role, catalyzes the transfer of a ribosyl phosphate group from 5-phosphoribose 1-diphosphate to orotate, leading to the formation of orotidine monophosphate (OMP). In Methanospirillum hungatei JF-1 (strain ATCC 27890 / DSM 864 / NBRC 100397 / JF-1), this protein is Orotate phosphoribosyltransferase.